The primary structure comprises 87 residues: Bombyxin B-10 (87 aa).

Positions 1–19 are cleaved as a signal peptide; the sequence is MKTILIFLVVISLMYSGEA. 3 disulfides stabilise this stretch: C27/C73, C39/C86, and C72/C77. A propeptide spans 46–64 (bombyxin B-10 C peptide); it reads SGAQYAPYFWTRQYLGSRG.

Belongs to the insulin family. In terms of assembly, heterodimer of a B chain and an A chain linked by two disulfide bonds.

Its subcellular location is the secreted. In terms of biological role, brain peptide responsible for activation of prothoracic glands to produce ecdysone in insects. This is Bombyxin B-10 (BBXB10) from Bombyx mori (Silk moth).